We begin with the raw amino-acid sequence, 485 residues long: Noelin (485 aa).

The signal sequence occupies residues 1-16 (MSVPLLKIGVVLSTMA). N-linked (GlcNAc...) asparagine glycosylation is found at N33, N103, N187, N288, N307, N394, N431, and N473. Residues 87–227 (RDARTKQLRQ…LRACMQKLAC (141 aa)) adopt a coiled-coil conformation. Positions 226-478 (ACGKLTGISD…QTLYNVTLFH (253 aa)) constitute an Olfactomedin-like domain. C227 and C409 form a disulfide bridge. The Endoplasmic reticulum retention signal signature appears at 482-485 (SDEL).

Homotetramer; disulfide-linked. Dimer of dimers, giving rise to a V-shaped homotretramer. Isoform 1 and isoform 3 interact with RTN4R. Identified in a complex with RTN4R and LINGO1. Peripherally associated with AMPAR complex. AMPAR complex consists of an inner core made of 4 pore-forming GluA/GRIA proteins (GRIA1, GRIA2, GRIA3 and GRIA4) and 4 major auxiliary subunits arranged in a twofold symmetry. One of the two pairs of distinct binding sites is occupied either by CNIH2, CNIH3 or CACNG2, CACNG3. The other harbors CACNG2, CACNG3, CACNG4, CACNG8 or GSG1L. This inner core of AMPAR complex is complemented by outer core constituents binding directly to the GluA/GRIA proteins at sites distinct from the interaction sites of the inner core constituents. Outer core constituents include at least PRRT1, PRRT2, CKAMP44/SHISA9, FRRS1L and NRN1. The proteins of the inner and outer core serve as a platform for other, more peripherally associated AMPAR constituents, including OLFM1. Alone or in combination, these auxiliary subunits control the gating and pharmacology of the AMPAR complex and profoundly impact their biogenesis and protein processing. Interacts with OLFM2. Interacts with DTNB. As to expression, expressed in the brain cortex, olfactory bulb and vomeronasal neuroepithelium (at protein level). Detected in brain cortex, hippocampus, dorsal root ganglion and olfactory bulb.

It is found in the secreted. The protein localises to the synapse. The protein resides in the endoplasmic reticulum. Its subcellular location is the cell projection. It localises to the axon. It is found in the perikaryon. Functionally, contributes to the regulation of axonal growth in the embryonic and adult central nervous system by inhibiting interactions between RTN4R and LINGO1. Inhibits RTN4R-mediated axon growth cone collapse. May play an important role in regulating the production of neural crest cells by the neural tube. May be required for normal responses to olfactory stimuli. This chain is Noelin (Olfm1), found in Mus musculus (Mouse).